A 339-amino-acid chain; its full sequence is Glucokinase (339 aa).

An ATP-binding site is contributed by 16-21; that stretch reads GDIGGT.

The protein belongs to the bacterial glucokinase family.

It localises to the cytoplasm. The enzyme catalyses D-glucose + ATP = D-glucose 6-phosphate + ADP + H(+). This chain is Glucokinase, found in Pseudomonas paraeruginosa (strain DSM 24068 / PA7) (Pseudomonas aeruginosa (strain PA7)).